We begin with the raw amino-acid sequence, 353 residues long: uncharacterized protein (353 aa).

9 consecutive transmembrane segments (helical) span residues 16 to 36 (AAYI…ISCG), 77 to 97 (VVLA…FQGL), 106 to 128 (YTLG…GLHL), 140 to 160 (SVAA…LVHA), 167 to 187 (LILT…LIIA), 208 to 228 (GWSY…LLII), 263 to 283 (LLTG…LVIP), 296 to 316 (HLLP…DLLS), and 323 to 343 (IELP…ALIL).

The protein belongs to the binding-protein-dependent transport system permease family. FecCD subfamily. In terms of assembly, the complex is composed of two ATP-binding proteins (YvrA), two transmembrane proteins (YvrB) and a solute-binding protein (YvrC).

It localises to the cell membrane. Its function is as follows. Probably part of an ABC transporter complex. Probably responsible for the translocation of the substrate across the membrane. This is an uncharacterized protein from Bacillus subtilis (strain 168).